The sequence spans 287 residues: Bifunctional protein FolD (287 aa).

NADP(+) contacts are provided by residues 166 to 168 (GAS) and Ile-232.

The protein belongs to the tetrahydrofolate dehydrogenase/cyclohydrolase family. Homodimer.

The catalysed reaction is (6R)-5,10-methylene-5,6,7,8-tetrahydrofolate + NADP(+) = (6R)-5,10-methenyltetrahydrofolate + NADPH. It catalyses the reaction (6R)-5,10-methenyltetrahydrofolate + H2O = (6R)-10-formyltetrahydrofolate + H(+). The protein operates within one-carbon metabolism; tetrahydrofolate interconversion. Functionally, catalyzes the oxidation of 5,10-methylenetetrahydrofolate to 5,10-methenyltetrahydrofolate and then the hydrolysis of 5,10-methenyltetrahydrofolate to 10-formyltetrahydrofolate. The protein is Bifunctional protein FolD of Pectobacterium carotovorum subsp. carotovorum (strain PC1).